Here is a 1241-residue protein sequence, read N- to C-terminus: Phosphorylase b kinase regulatory subunit alpha, skeletal muscle isoform (1241 aa).

9 positions are modified to phosphoserine: serine 629, serine 730, serine 736, serine 739, serine 759, serine 812, serine 973, serine 982, and serine 986. The tract at residues 811–841 (LSELYVKVGEIRHWGLIRYISGILRKKVEAL) is calmodulin-binding. Phosphoserine; by autocatalysis is present on serine 1008. At serine 1019 the chain carries Phosphoserine; by PKA. Serine 1021 and serine 1024 each carry phosphoserine. Positions 1064–1104 (SKDSRQGQWQRRRRLDGALNRVPIGFYQKVWKILQKCHGLS) are calmodulin-binding. Serine 1131 bears the Phosphoserine mark. Cysteine 1238 carries S-farnesyl cysteine lipidation.

It belongs to the phosphorylase b kinase regulatory chain family. As to quaternary structure, hexadecamer of 4 heterotetramers, each composed of alpha, beta, gamma, and delta subunits. Alpha (PHKA1 or PHKA2) and beta (PHKB) are regulatory subunits, gamma (PHKG1 or PHKG2) is the catalytic subunit, and delta is calmodulin. In terms of processing, although the final Cys may be farnesylated, the terminal tripeptide is probably not removed, and the C-terminus is not methylated. Both isoforms are expressed in muscle.

It is found in the cell membrane. It participates in glycan biosynthesis; glycogen metabolism. With respect to regulation, by phosphorylation of various serine residues and by calcium. Functionally, phosphorylase b kinase catalyzes the phosphorylation of serine in certain substrates, including troponin I. The alpha chain may bind calmodulin. In Mus musculus (Mouse), this protein is Phosphorylase b kinase regulatory subunit alpha, skeletal muscle isoform (Phka1).